The sequence spans 357 residues: Serine protease 1 (357 aa).

A signal peptide spans 1–29; the sequence is MRRTTRARTGLSALLLAASLGLGAAPAGA. Positions 30-170 are excised as a propeptide; it reads DAPQRPAPTP…TRVPGVFQRE (141 aa). An intrachain disulfide couples C184 to C204. Catalysis depends on charge relay system residues H203, D232, and S313. C307 and C333 are joined by a disulfide.

Belongs to the peptidase S1 family.

The protein localises to the secreted. In terms of biological role, serine protease that preferentially cleaves peptide bonds on the C-terminal side of aspartate and glutamate with a 10-fold higher reactivity for a glutamyl bond than an aspartyl bond. In Streptomyces fradiae (Streptomyces roseoflavus), this protein is Serine protease 1.